The chain runs to 404 residues: Cysteine desulfurase IscS (404 aa).

Pyridoxal 5'-phosphate contacts are provided by residues 75 to 76 (AT), N155, Q183, and 203 to 205 (SAH). K206 bears the N6-(pyridoxal phosphate)lysine mark. Residue T243 coordinates pyridoxal 5'-phosphate. Residue C328 is the Cysteine persulfide intermediate of the active site. C328 lines the [2Fe-2S] cluster pocket.

This sequence belongs to the class-V pyridoxal-phosphate-dependent aminotransferase family. NifS/IscS subfamily. As to quaternary structure, homodimer. Forms a heterotetramer with IscU, interacts with other sulfur acceptors. The cofactor is pyridoxal 5'-phosphate.

It is found in the cytoplasm. It catalyses the reaction (sulfur carrier)-H + L-cysteine = (sulfur carrier)-SH + L-alanine. The protein operates within cofactor biosynthesis; iron-sulfur cluster biosynthesis. In terms of biological role, master enzyme that delivers sulfur to a number of partners involved in Fe-S cluster assembly, tRNA modification or cofactor biosynthesis. Catalyzes the removal of elemental sulfur atoms from cysteine to produce alanine. Functions as a sulfur delivery protein for Fe-S cluster synthesis onto IscU, an Fe-S scaffold assembly protein, as well as other S acceptor proteins. This is Cysteine desulfurase IscS from Pseudomonas putida (strain W619).